A 159-amino-acid chain; its full sequence is Mitotic-spindle organizing protein 2 (159 aa).

The tract at residues 87-159 (LASDPQDSVP…SGKSNSRSSP (73 aa)) is disordered. The span at 91 to 105 (PQDSVPISLSTSTSE) shows a compositional bias: polar residues. Residue arginine 111 is modified to Omega-N-methylarginine. Serine 153 is modified (phosphoserine).

This sequence belongs to the MOZART2 family. Associates with the gamma-tubulin ring complex (gTuRC) consisting of TUBGCP2, TUBGCP3, TUBGCP4, TUBGCP5 and TUBGCP6 and gamma-tubulin TUBG1 or TUBG2; within the complex, interacts with TUBGCP2; the interaction plays a role in gTuRC activation.

Its subcellular location is the cytoplasm. It localises to the cytoskeleton. The protein resides in the microtubule organizing center. It is found in the centrosome. The protein localises to the spindle. Required for the recruitment and the assembly of the gamma-tubulin ring complex (gTuRC) at the centrosome. The gTuRC regulates the minus-end nucleation of alpha-beta tubulin heterodimers that grow into microtubule protafilaments, a critical step in centrosome duplication and spindle formation. This Mus musculus (Mouse) protein is Mitotic-spindle organizing protein 2 (Mzt2).